We begin with the raw amino-acid sequence, 304 residues long: Non-structural maintenance of chromosomes element 3 homolog (304 aa).

2 disordered regions span residues 1 to 82 and 285 to 304; these read MLQK…PRSQ and ALADEENRARPQPSGPAPSS. The span at 32-43 shows a compositional bias: basic and acidic residues; sequence AGEDARVLRDGF. A phosphoserine mark is found at serine 57, serine 60, and serine 64. The segment covering 60–80 has biased composition (low complexity); that stretch reads SQGPSPQGARRAQAAPAVGPR. Positions 78 to 304 are interaction with NSMCE1; the sequence is GPRSQKQLEL…PQPSGPAPSS (227 aa). The MAGE domain maps to 85–285; that stretch reads LELKVSELVQ…KDWPAQYCEA (201 aa).

As to quaternary structure, component of the SMC5-SMC6 complex which consists at least of SMC5, SMC6, NSMCE2, NSMCE1, NSMCE4A or EID3 and NSMCE3. NSMCE1, NSMCE4A or EID3 and NSMCE3 probably form a subcomplex that bridges the head domains of the SMC5:SMC6 heterodimer. Interacts with PJA1. Interacts with E2F1 (via C-terminus). Interacts with NGFR (via C-terminus). Interacts with NSMCE1. Interacts with NSMCE4. Interacts with SMC6. Interacts with EID3. Ubiquitous.

The protein resides in the cytoplasm. It is found in the nucleus. Its subcellular location is the chromosome. It localises to the telomere. Component of the SMC5-SMC6 complex, a complex involved in repair of DNA double-strand breaks by homologous recombination. The complex may promote sister chromatid homologous recombination by recruiting the SMC1-SMC3 cohesin complex to double-strand breaks. The complex is required for telomere maintenance via recombination in ALT (alternative lengthening of telomeres) cell lines and mediates sumoylation of shelterin complex (telosome) components which is proposed to lead to shelterin complex disassembly in ALT-associated PML bodies (APBs). In vitro enhances ubiquitin ligase activity of NSMCE1. Proposed to act through recruitment and/or stabilization of the Ubl-conjugating enzyme (E2) at the E3:substrate complex. May be a growth suppressor that facilitates the entry of the cell into cell cycle arrest. This Homo sapiens (Human) protein is Non-structural maintenance of chromosomes element 3 homolog.